The sequence spans 611 residues: Mitochondrial distribution and morphology protein 34 (611 aa).

Positions 1–195 constitute an SMP-LTD domain; the sequence is MAFNFNWSPL…LPAIIHRLSL (195 aa). Over residues 325–342 the composition is skewed to polar residues; the sequence is SAPLSSQDTASVASSQSR. Disordered stretches follow at residues 325–347, 361–402, 415–544, and 587–611; these read SAPL…GLPS, RHSK…STIT, SIIP…PTYT, and SYVG…AYRH. The span at 361 to 373 shows a compositional bias: basic residues; that stretch reads RHSKAHARKRKKR. Basic and acidic residues-rich tracts occupy residues 374–385 and 444–459; these read VIDLRPHRKPTD and TLRD…ERTN. A compositionally biased stretch (pro residues) spans 520–529; it reads PLGPPAPAPI.

Belongs to the MDM34 family. In terms of assembly, component of the ER-mitochondria encounter structure (ERMES) or MDM complex, composed of MMM1, MDM10, MDM12 and MDM34.

The protein localises to the mitochondrion outer membrane. Component of the ERMES/MDM complex, which serves as a molecular tether to connect the endoplasmic reticulum (ER) and mitochondria. Components of this complex are involved in the control of mitochondrial shape and protein biogenesis, and function in nonvesicular lipid trafficking between the ER and mitochondria. MDM34 is required for the interaction of the ER-resident membrane protein MMM1 and the outer mitochondrial membrane-resident beta-barrel protein MDM10. This Paracoccidioides brasiliensis (strain Pb18) protein is Mitochondrial distribution and morphology protein 34.